Consider the following 399-residue polypeptide: Vitamin K-dependent protein Z (399 aa).

An N-terminal signal peptide occupies residues 1–22 (MAGCILLLRGFILTLILHQVEL). Positions 23–40 (SVFLPAPKANNVLRRWRR) are excised as a propeptide. Residues 41–86 (GSSYFLEEIFQGNLEKECYEEVCNYEEAREVFENDVITDEFWRQYG) enclose the Gla domain. 4-carboxyglutamate occurs at positions 47, 48, 55, 57, 60, 61, 66, 67, 70, 73, and 80. Cysteine 58 and cysteine 63 are oxidised to a cystine. 2 consecutive EGF-like domains span residues 87–123 (GGSP…KTCA) and 125–166 (AKNE…KSCG). 7 disulfide bridges follow: cysteine 91–cysteine 102, cysteine 96–cysteine 111, cysteine 113–cysteine 122, cysteine 129–cysteine 141, cysteine 137–cysteine 150, cysteine 152–cysteine 165, and cysteine 208–cysteine 224. N-linked (GlcNAc...) asparagine glycosylation is present at asparagine 99. Aspartate 104 is subject to (3R)-3-hydroxyaspartate. Positions 172–399 (ACGALTSEHI…YSMWFKQIMK (228 aa)) constitute a Peptidase S1 domain. Residues asparagine 230, asparagine 305, and asparagine 331 are each glycosylated (N-linked (GlcNAc...) asparagine). Cysteine 326 and cysteine 340 are disulfide-bonded.

The protein belongs to the peptidase S1 family. The iron and 2-oxoglutarate dependent 3-hydroxylation of aspartate and asparagine is (R) stereospecific within EGF domains. Plasma.

Its subcellular location is the secreted. Functionally, appears to assist hemostasis by binding thrombin and promoting its association with phospholipid vesicles. Inhibits activity of the coagulation protease factor Xa in the presence of SERPINA10, calcium and phospholipids. The protein is Vitamin K-dependent protein Z (Proz) of Mus musculus (Mouse).